Consider the following 204-residue polypeptide: UPF0637 protein SA0957 (204 aa).

The protein belongs to the UPF0637 family.

This Staphylococcus aureus (strain N315) protein is UPF0637 protein SA0957.